A 435-amino-acid polypeptide reads, in one-letter code: NADH-quinone oxidoreductase subunit D (435 aa).

It belongs to the complex I 49 kDa subunit family. NDH-1 is composed of 14 different subunits. Subunits NuoB, C, D, E, F, and G constitute the peripheral sector of the complex.

Its subcellular location is the cell inner membrane. The catalysed reaction is a quinone + NADH + 5 H(+)(in) = a quinol + NAD(+) + 4 H(+)(out). NDH-1 shuttles electrons from NADH, via FMN and iron-sulfur (Fe-S) centers, to quinones in the respiratory chain. The immediate electron acceptor for the enzyme in this species is believed to be ubiquinone. Couples the redox reaction to proton translocation (for every two electrons transferred, four hydrogen ions are translocated across the cytoplasmic membrane), and thus conserves the redox energy in a proton gradient. The sequence is that of NADH-quinone oxidoreductase subunit D from Xylella fastidiosa (strain 9a5c).